The primary structure comprises 584 residues: Leucine-rich repeat and fibronectin type III domain-containing protein 1 (584 aa).

The signal sequence occupies residues 1-17 (MERLVFCVLVFGALAKA). The LRRNT domain maps to 18–51 (QLCPGRCICQTISPTLTLLCAKTGLLFVPPTVDR). The Extracellular portion of the chain corresponds to 18-494 (QLCPGRCICQ…VPSQFLGGTM (477 aa)). LRR repeat units lie at residues 52 to 73 (KTVELRLTDNFITAVRRKDFLN), 76 to 97 (SLVHLTLSRNTISQIAPHAFMG), 100 to 121 (SLRALHMDGNRLSVINSDQLKG), 124 to 145 (NLRHLILGNNQIHHIEESSFDE), 149 to 170 (TIEDLDLSYNNLRTLPWEAIAR), 173 to 194 (NINTLTLDHNLIDHIGVGTFTL), and 197 to 218 (KLVRLDMTSNRLQTLPPDTLFQ). An N-linked (GlcNAc...) asparagine glycan is attached at asparagine 73. In terms of domain architecture, LRRCT spans 241-287 (NPLHCNCELLWLRRLTREDDLETCASPEHLMDKYFWSIQEEEFICEP). Positions 288 to 375 (PLITKHQVTK…GIATAAVHVH (88 aa)) constitute an Ig-like domain. Cysteine 310 and cysteine 359 form a disulfide bridge. N-linked (GlcNAc...) asparagine glycosylation is found at asparagine 332, asparagine 341, asparagine 384, asparagine 408, and asparagine 421. The segment at 393-414 (DPGLSDISTSSRSSSNDSKTHS) is disordered. The segment covering 397–409 (SDISTSSRSSSND) has biased composition (low complexity). The chain crosses the membrane as a helical span at residues 495–515 (IIIIGGIIVASVLVFIIILMI). Over 516-584 (RYKAYSGGGG…MVLPILHLLF (69 aa)) the chain is Cytoplasmic. Residues 539 to 564 (HVHSQTNGSRSAATKQSEEPPESPAG) form a disordered region. Residues 540–553 (VHSQTNGSRSAATK) show a composition bias toward polar residues.

It belongs to the LRFN family.

It localises to the membrane. Its subcellular location is the synapse. Involved in the regulation of excitatory synapses. In Danio rerio (Zebrafish), this protein is Leucine-rich repeat and fibronectin type III domain-containing protein 1 (lrfn1).